We begin with the raw amino-acid sequence, 319 residues long: tRNA (guanine(9)-N(1))-methyltransferase Trmt10A (319 aa).

2 disordered regions span residues 16–87 and 275–319; these read LSLN…KRQL and AKIT…SLDS. Positions 17–33 are enriched in polar residues; sequence SLNNCPGTTPGTPMSKN. The Nuclear localization signal signature appears at 35 to 42; it reads LKKQRKLA. 3 stretches are compositionally biased toward basic and acidic residues: residues 40–58, 78–87, and 276–302; these read KLAEFAELRKLRREREREK, SRKELKKRQL, and KITDKKEPNHCLEQQDEKQKQEAESDK. A coiled-coil region spans residues 44-67; the sequence is FAELRKLRREREREKKKQKRREAK. Residues 83 to 274 form the SAM-dependent MTase TRM10-type domain; the sequence is KKRQLADGGK…ETIPMRKGAK (192 aa).

It belongs to the class IV-like SAM-binding methyltransferase superfamily. TRM10 family.

The protein resides in the nucleus. It localises to the nucleolus. It is found in the chromosome. It catalyses the reaction guanosine(9) in tRNA + S-adenosyl-L-methionine = N(1)-methylguanosine(9) in tRNA + S-adenosyl-L-homocysteine + H(+). Functionally, S-adenosyl-L-methionine-dependent guanine N(1)-methyltransferase that catalyzes the formation of N(1)-methylguanine at position 9 (m1G9) in tRNAs. Modulates Mettl3-mediated N6-methyladenosine (m6A) methylation of mRNA 5'-UTRs and 3'-UTRs independent of its methyltransferase activity; influences mRNA stability and protein levels, in particular of Hsp70 chaperone proteins and other stress response proteins. Also regulates stability of transcripts encoding proteins involved in signaling processes and proteins involved in neurogenesis and axon guidance pathways. The sequence is that of tRNA (guanine(9)-N(1))-methyltransferase Trmt10A from Drosophila melanogaster (Fruit fly).